The chain runs to 321 residues: Biotin synthase (321 aa).

The Radical SAM core domain maps to 45 to 271 (FFGKKVKLNM…INPSKEIRIA (227 aa)). 3 residues coordinate [4Fe-4S] cluster: C63, C67, and C70. [2Fe-2S] cluster-binding residues include C106, C139, C199, and R269.

Belongs to the radical SAM superfamily. Biotin synthase family. As to quaternary structure, homodimer. The cofactor is [4Fe-4S] cluster. Requires [2Fe-2S] cluster as cofactor.

It carries out the reaction (4R,5S)-dethiobiotin + (sulfur carrier)-SH + 2 reduced [2Fe-2S]-[ferredoxin] + 2 S-adenosyl-L-methionine = (sulfur carrier)-H + biotin + 2 5'-deoxyadenosine + 2 L-methionine + 2 oxidized [2Fe-2S]-[ferredoxin]. It functions in the pathway cofactor biosynthesis; biotin biosynthesis; biotin from 7,8-diaminononanoate: step 2/2. Its function is as follows. Catalyzes the conversion of dethiobiotin (DTB) to biotin by the insertion of a sulfur atom into dethiobiotin via a radical-based mechanism. The protein is Biotin synthase of Staphylococcus haemolyticus (strain JCSC1435).